The primary structure comprises 159 residues: G-protein-signaling modulator 3 (159 aa).

Residues 1–54 (MEAERPQEEDGEQSLPQDDQGWPPVNATARPWRSAPPSPPPPGTRHTALGPRSG) form a disordered region. Ser34, Ser38, Ser55, and Ser58 each carry phosphoserine. The segment covering 34–43 (SAPPSPPPPG) has biased composition (pro residues). Thr61 is modified (phosphothreonine). One can recognise a GoLoco 1 domain in the interval 61–83 (TELLLDLVAEAQSRRLEEQRATF). Residues 77–97 (EEQRATFHTPEAPPNLAPAPP) are disordered. Pro residues predominate over residues 87-97 (EAPPNLAPAPP). 2 consecutive GoLoco domains span residues 103–125 (KEQL…RSDP) and 131–154 (GQEL…RSRP).

The protein localises to the cytoplasm. In terms of biological role, interacts with subunit of G(i) alpha proteins and regulates the activation of G(i) alpha proteins. The sequence is that of G-protein-signaling modulator 3 (Gpsm3) from Mus musculus (Mouse).